The sequence spans 140 residues: MKIKHEHIESVLFALAAEKGQAWVANAITEEYLRQGGGELPLVPGKDWNNQQNIYHRWLKGETKTQREKIQKLIPAILAILPRELRHRLCIFDTLERRALLAAQEALSTAIDAHDDAVQAVYRKAHFSGGGSSDDSVIVH.

In terms of biological role, transcriptional regulator that causes a severe detrimental growth effect and reduces cell viability. When expressed, it alters expression of a variety of bacterial regulons normally controlled by the transcriptional regulatory protein RcsA, resulting in deficient lipopolysaccharide biosynthesis and cell division. YdaT has no effect on Rac prophage excision. Overexpression of ydaST reduces growth and leads to loss of cell viability. May contribute to toxicity and morphological defects. The polypeptide is Transcriptional regulator YdaT (ydaT) (Escherichia coli (strain K12)).